A 309-amino-acid polypeptide reads, in one-letter code: MVFPAKRFCLVPSMEGVRWAFSCGTWLPSRAEWLLAVRSIQPEEKERIGQFVFARDAKAAMAGRLMIRKLVAEKLNIPWNHIRLQRTAKGKPVLAKDSSNPYPNFNFNISHQGDYAVLAAEPELQVGIDIMKTSFPGRGSIPEFFHIMKRKFTNKEWETIRGFKDEWTQLDMFYRNWALKESFIKAIGVGLGFELQRLEFDLSPLNLDIGQVYKETRLFLDGEEEKEWAFEESKIDEHHFVAVALRKPDGSRHQDVPSQDDSKPTQRQFTILNFNDLISSAVPMTPEDPSFWDCFCFTEEIPIRNGTKS.

Residues arginine 47, 86-91 (RTAKGK), and 108-111 (NISH) each bind CoA. The Mg(2+) site is built by aspartate 129 and glutamate 181. 181–185 (ESFIK) is a CoA binding site. Serine 258 is modified (phosphoserine).

The protein belongs to the P-Pant transferase superfamily. AcpS family. Monomer. It depends on Mg(2+) as a cofactor.

The protein localises to the cytoplasm. It localises to the cytosol. The enzyme catalyses apo-[ACP] + CoA = holo-[ACP] + adenosine 3',5'-bisphosphate + H(+). It catalyses the reaction apo-[ACP] + acetyl-CoA = acetyl-[ACP] + adenosine 3',5'-bisphosphate + H(+). In terms of biological role, catalyzes the post-translational modification of target proteins by phosphopantetheine. Can transfer the 4'-phosphopantetheine moiety from coenzyme A, regardless of whether the CoA is presented in the free thiol form or as an acetyl thioester, to a serine residue of a broad range of acceptors including the acyl carrier domain of FASN. The chain is L-aminoadipate-semialdehyde dehydrogenase-phosphopantetheinyl transferase (AASDHPPT) from Pongo abelii (Sumatran orangutan).